A 1125-amino-acid chain; its full sequence is Phytochrome A (1125 aa).

Composition is skewed to low complexity over residues 1-14 and 39-48; these read MSSSRPSHSSSNSA and SGSSFDYSSS. 2 disordered regions span residues 1-22 and 38-64; these read MSSSRPSHSSSNSARSRHSARI and ESGSSFDYSSSVRVTDSVGGDQPPRSD. Residues 218–401 enclose the GAF domain; sequence SMERLCDTMV…VFAIHVNKEL (184 aa). Cysteine 323 provides a ligand contact to phytochromobilin. PAS domains lie at 617 to 687 and 750 to 821; these read VTSE…LQGK and DYKA…VNLG. The 217-residue stretch at 901–1117 folds into the Histidine kinase domain; that stretch reads YLKKQIWNPL…SFIISVELAG (217 aa).

Belongs to the phytochrome family. As to quaternary structure, homodimer. In terms of processing, contains one covalently linked phytochromobilin chromophore.

Regulatory photoreceptor which exists in two forms that are reversibly interconvertible by light: the Pr form that absorbs maximally in the red region of the spectrum and the Pfr form that absorbs maximally in the far-red region. Photoconversion of Pr to Pfr induces an array of morphogenic responses, whereas reconversion of Pfr to Pr cancels the induction of those responses. Pfr controls the expression of a number of nuclear genes including those encoding the small subunit of ribulose-bisphosphate carboxylase, chlorophyll A/B binding protein, protochlorophyllide reductase, rRNA, etc. It also controls the expression of its own gene(s) in a negative feedback fashion. The sequence is that of Phytochrome A (PHYA) from Populus tremuloides (Quaking aspen).